Here is a 255-residue protein sequence, read N- to C-terminus: Small ribosomal subunit protein eS1 (255 aa).

At A2 the chain carries N-acetylalanine; partial.

It belongs to the eukaryotic ribosomal protein eS1 family. As to quaternary structure, component of the small ribosomal subunit. Mature ribosomes consist of a small (40S) and a large (60S) subunit. The 40S subunit contains about 33 different proteins and 1 molecule of RNA (18S). The 60S subunit contains about 49 different proteins and 3 molecules of RNA (25S, 5.8S and 5S).

It localises to the cytoplasm. This Vanderwaltozyma polyspora (strain ATCC 22028 / DSM 70294 / BCRC 21397 / CBS 2163 / NBRC 10782 / NRRL Y-8283 / UCD 57-17) (Kluyveromyces polysporus) protein is Small ribosomal subunit protein eS1.